We begin with the raw amino-acid sequence, 61 residues long: Small ribosomal subunit protein uS14B (61 aa).

Residues C24, C27, C40, and C43 each contribute to the Zn(2+) site.

It belongs to the universal ribosomal protein uS14 family. Zinc-binding uS14 subfamily. In terms of assembly, part of the 30S ribosomal subunit. Contacts proteins S3 and S10. Zn(2+) is required as a cofactor.

In terms of biological role, binds 16S rRNA, required for the assembly of 30S particles and may also be responsible for determining the conformation of the 16S rRNA at the A site. This chain is Small ribosomal subunit protein uS14B, found in Lactiplantibacillus plantarum (strain ATCC BAA-793 / NCIMB 8826 / WCFS1) (Lactobacillus plantarum).